The sequence spans 775 residues: ADP-ribosylation factor GTPase-activating protein AGD4 (775 aa).

The BAR domain maps to 2–226 (ATFINLEDSP…IHQILTYAQQ (225 aa)). One can recognise a PH domain in the interval 288-421 (EVIKQGYLLK…WVNKITKAIG (134 aa)). Positions 467 to 603 (DDVSTILRGL…ALVIKDESEA (137 aa)) constitute an Arf-GAP domain. The segment at 482–505 (CAECNAPEPDWASLNLGVLLCIQC) adopts a C4-type zinc-finger fold. 2 ANK repeats span residues 682–711 (QGCS…DLNI) and 715–744 (HGRT…RPSI).

Expressed in roots, hypocotyls, cotyledons, leaf and shoot apical meristems and siliques.

Its function is as follows. Probable GTPase-activating protein. The chain is ADP-ribosylation factor GTPase-activating protein AGD4 (AGD4) from Arabidopsis thaliana (Mouse-ear cress).